The following is a 613-amino-acid chain: Proteasome-associated ATPase (613 aa).

Positions 1–29 are disordered; the sequence is MSESERSEGFPEGFAGAGSGSLSSEDAAE. The stretch at 23 to 100 forms a coiled coil; that stretch reads SSEDAAELEA…LREEVDRLGQ (78 aa). 300–305 lines the ATP pocket; that stretch reads GCGKTL. An Isoglutamyl lysine isopeptide (Lys-Gln) (interchain with Q-Cter in protein Pup) cross-link involves residue Lys595. Residues 612–613 form a docks into pockets in the proteasome alpha-ring region; that stretch reads YL.

It belongs to the AAA ATPase family. In terms of assembly, homohexamer. Assembles into a hexameric ring structure that caps the 20S proteasome core. Strongly interacts with the prokaryotic ubiquitin-like protein Pup through a hydrophobic interface; the interacting region of ARC lies in its N-terminal coiled-coil domain. There is one Pup binding site per ARC hexamer ring. Upon ATP-binding, the C-terminus of ARC interacts with the alpha-rings of the proteasome core, possibly by binding to the intersubunit pockets.

It participates in protein degradation; proteasomal Pup-dependent pathway. Its function is as follows. ATPase which is responsible for recognizing, binding, unfolding and translocation of pupylated proteins into the bacterial 20S proteasome core particle. May be essential for opening the gate of the 20S proteasome via an interaction with its C-terminus, thereby allowing substrate entry and access to the site of proteolysis. Thus, the C-termini of the proteasomal ATPase may function like a 'key in a lock' to induce gate opening and therefore regulate proteolysis. This Mycolicibacterium smegmatis (strain ATCC 700084 / mc(2)155) (Mycobacterium smegmatis) protein is Proteasome-associated ATPase.